Here is a 468-residue protein sequence, read N- to C-terminus: Aspartate ammonia-lyase (468 aa).

Residues Thr-99, Ser-138, Thr-139, Asn-140, and Thr-185 each contribute to the L-aspartate site. Positions 315–324 (GSSIMPGKVN) are SS loop. Residue Ser-316 is the Proton acceptor of the active site. Residues Ser-317 and Lys-322 each contribute to the L-aspartate site.

It belongs to the class-II fumarase/aspartase family. Aspartase subfamily. In terms of assembly, homotetramer.

It catalyses the reaction L-aspartate = fumarate + NH4(+). Its function is as follows. Catalyzes the reversible conversion of L-aspartate to fumarate and ammonia. The chain is Aspartate ammonia-lyase (aspA) from Helicobacter pylori (strain J99 / ATCC 700824) (Campylobacter pylori J99).